A 238-amino-acid polypeptide reads, in one-letter code: Cysteine-rich venom protein (238 aa).

A signal peptide spans 1–19; that stretch reads MIAFIVLLSLAAVLQQSSG. The 127-residue stretch at 38 to 164 folds into the SCP domain; the sequence is VDKHNALRRS…STKYLYVCQY (127 aa). Intrachain disulfides connect C75–C153, C92–C165, C148–C162, C184–C191, C187–C196, C200–C233, C209–C227, and C218–C231. A ShKT domain is found at 200–233; it reads CKYEDAFTNCKALAKKTKCKTEWIKSKCPATCFC.

This sequence belongs to the CRISP family. In terms of tissue distribution, expressed by the venom gland.

The protein localises to the secreted. Functionally, blocks contraction of smooth muscle elicited by high potassium-induced depolarization, but does not block caffeine-stimulated contraction. May target voltage-gated calcium channels on smooth muscle. The polypeptide is Cysteine-rich venom protein (Austrelaps superbus (Lowland copperhead snake)).